Consider the following 200-residue polypeptide: Large ribosomal subunit protein uL4c (200 aa).

Residues 45–71 form a disordered region; that stretch reads RAEIRGGGRKPWKQKGTGRARAGSRRS. A compositionally biased stretch (basic residues) spans 51–68; sequence GGRKPWKQKGTGRARAGS.

Belongs to the universal ribosomal protein uL4 family. Part of the 50S ribosomal subunit.

The protein localises to the plastid. It is found in the chloroplast. Functionally, probably binds the 23S rRNA. The polypeptide is Large ribosomal subunit protein uL4c (rpl4) (Cyanidioschyzon merolae (strain NIES-3377 / 10D) (Unicellular red alga)).